The following is a 36-amino-acid chain: MEVNILGLIATALFIIIPTSFLLILYVQTASQGSKS.

A helical membrane pass occupies residues 5-25; sequence ILGLIATALFIIIPTSFLLIL.

Belongs to the PsbM family. PSII is composed of 1 copy each of membrane proteins PsbA, PsbB, PsbC, PsbD, PsbE, PsbF, PsbH, PsbI, PsbJ, PsbK, PsbL, PsbM, PsbT, PsbX, PsbY, PsbZ, Psb30/Ycf12, at least 3 peripheral proteins of the oxygen-evolving complex and a large number of cofactors. It forms dimeric complexes.

It is found in the plastid. Its subcellular location is the chloroplast thylakoid membrane. Functionally, one of the components of the core complex of photosystem II (PSII). PSII is a light-driven water:plastoquinone oxidoreductase that uses light energy to abstract electrons from H(2)O, generating O(2) and a proton gradient subsequently used for ATP formation. It consists of a core antenna complex that captures photons, and an electron transfer chain that converts photonic excitation into a charge separation. This subunit is found at the monomer-monomer interface. This is Photosystem II reaction center protein M from Chlorokybus atmophyticus (Soil alga).